We begin with the raw amino-acid sequence, 133 residues long: ATP synthase epsilon chain (133 aa).

This sequence belongs to the ATPase epsilon chain family. In terms of assembly, F-type ATPases have 2 components, CF(1) - the catalytic core - and CF(0) - the membrane proton channel. CF(1) has five subunits: alpha(3), beta(3), gamma(1), delta(1), epsilon(1). CF(0) has three main subunits: a, b and c.

It is found in the cell membrane. Produces ATP from ADP in the presence of a proton gradient across the membrane. The sequence is that of ATP synthase epsilon chain from Bacillus anthracis (strain A0248).